The sequence spans 429 residues: D-amino acid dehydrogenase (429 aa).

3 to 17 (VLILGSGVIGVTSAW) serves as a coordination point for FAD.

Belongs to the DadA oxidoreductase family. Requires FAD as cofactor.

The catalysed reaction is a D-alpha-amino acid + A + H2O = a 2-oxocarboxylate + AH2 + NH4(+). It participates in amino-acid degradation; D-alanine degradation; NH(3) and pyruvate from D-alanine: step 1/1. Functionally, oxidative deamination of D-amino acids. The polypeptide is D-amino acid dehydrogenase (Xanthomonas euvesicatoria pv. vesicatoria (strain 85-10) (Xanthomonas campestris pv. vesicatoria)).